A 264-amino-acid polypeptide reads, in one-letter code: MNIKEGKFLETILAEKKQEIAQMPDENSKPIRQTYRLYDYLKKHSDQLQVIAEVKKASPSLGDINLEVDIIAQAKNYEQAGAAMISVLTDPVFFKGNIEYLREISKNVQIPTLNKDFIIDKKQINRALNAGATVILLIVACFENDFEKLEELYNYAISLGLEVLVETHNKAELDRAHQLAAKIIGVNNRNLKTFEVSLQNSTDLVPYFKEENVYISESGIFGKKEAQKVAENFNGILVGTALMQANNLTKSLTDLKIKRKNDEH.

It belongs to the TrpC family.

The catalysed reaction is 1-(2-carboxyphenylamino)-1-deoxy-D-ribulose 5-phosphate + H(+) = (1S,2R)-1-C-(indol-3-yl)glycerol 3-phosphate + CO2 + H2O. The protein operates within amino-acid biosynthesis; L-tryptophan biosynthesis; L-tryptophan from chorismate: step 4/5. The protein is Indole-3-glycerol phosphate synthase of Lactococcus lactis subsp. cremoris (strain MG1363).